The primary structure comprises 188 residues: Putative 3-methyladenine DNA glycosylase (188 aa).

This sequence belongs to the DNA glycosylase MPG family.

This is Putative 3-methyladenine DNA glycosylase from Ehrlichia ruminantium (Cowdria ruminantium).